A 218-amino-acid polypeptide reads, in one-letter code: Thiopurine S-methyltransferase (218 aa).

S-adenosyl-L-methionine contacts are provided by W10, L45, E66, and R123.

The protein belongs to the class I-like SAM-binding methyltransferase superfamily. TPMT family.

It is found in the cytoplasm. The catalysed reaction is S-adenosyl-L-methionine + a thiopurine = S-adenosyl-L-homocysteine + a thiopurine S-methylether.. The sequence is that of Thiopurine S-methyltransferase from Pseudomonas aeruginosa (strain LESB58).